The sequence spans 456 residues: uncharacterized protein (456 aa).

The TRAM domain maps to 3–61 (TIKKNEVKTGKVIDLTHEGHGVVKVDRYPIFIPNALIDEEIKFKLIKVKKNFAIGKLIE). [4Fe-4S] cluster-binding residues include Cys74, Cys80, Cys83, and Cys162. S-adenosyl-L-methionine-binding residues include Gln286, Tyr315, Glu336, and Asp384. Cys411 functions as the Nucleophile in the catalytic mechanism.

It belongs to the class I-like SAM-binding methyltransferase superfamily. RNA M5U methyltransferase family.

This is an uncharacterized protein from Staphylococcus epidermidis (strain ATCC 12228 / FDA PCI 1200).